The sequence spans 99 residues: Virion membrane protein OPG135 (99 aa).

The signal sequence occupies residues 1–22; that stretch reads MSCYTAILKSVGGLALFQVANG. The Intravirion segment spans residues 23–45; the sequence is AIDLCRHFFMYFCEQKLRPNSFW. A helical transmembrane segment spans residues 46–66; the sequence is FVVVRAIASMIMYLVLGIALL. Residues 67–83 lie on the Virion surface side of the membrane; that stretch reads YISEQDDKKNTNNDGSN. The segment covering 73–89 has biased composition (basic and acidic residues); it reads DKKNTNNDGSNNDKRNE. A disordered region spans residues 73 to 99; that stretch reads DKKNTNNDGSNNDKRNESSINSNSSPK. An N-linked (GlcNAc...) asparagine; by host glycan is attached at Asn88. Positions 90–99 are enriched in polar residues; sequence SSINSNSSPK.

Belongs to the oerthopoxvirus OPG135 family.

It is found in the virion membrane. The protein localises to the host cytoplasm. Functionally, envelope protein. Required for an early step in virion morphogenesis. This chain is Virion membrane protein OPG135 (OPG135), found in Homo sapiens (Human).